A 200-amino-acid chain; its full sequence is Holliday junction resolvase RecU (200 aa).

The tract at residues 1-25 (MTIRYPNGKRYNQASQPQKTPIKTH) is disordered. Over residues 10–25 (RYNQASQPQKTPIKTH) the composition is skewed to polar residues. Mg(2+)-binding residues include threonine 85, aspartate 87, glutamate 100, and glutamine 119.

It belongs to the RecU family. Requires Mg(2+) as cofactor.

The protein localises to the cytoplasm. It carries out the reaction Endonucleolytic cleavage at a junction such as a reciprocal single-stranded crossover between two homologous DNA duplexes (Holliday junction).. Its function is as follows. Endonuclease that resolves Holliday junction intermediates in genetic recombination. Cleaves mobile four-strand junctions by introducing symmetrical nicks in paired strands. Promotes annealing of linear ssDNA with homologous dsDNA. Required for DNA repair, homologous recombination and chromosome segregation. This Bacillus cereus (strain B4264) protein is Holliday junction resolvase RecU.